Here is a 445-residue protein sequence, read N- to C-terminus: Coronin-A (445 aa).

WD repeat units lie at residues 77-117, 127-167, 170-209, and 259-299; these read GHKS…LTDS, GHKR…NLTT, GHSD…IVNE, and DSAS…PYIH. Residues 410 to 444 are a coiled coil; that stretch reads KNEKELREEYEKLKIRVAYLESEIVKKDAKIKELT.

It belongs to the WD repeat coronin family. Binds to F-actin.

It localises to the cell surface. Required for normal motility. Participates in cytokinesis. In Dictyostelium discoideum (Social amoeba), this protein is Coronin-A (corA).